The chain runs to 121 residues: Large ribosomal subunit protein bL12 (121 aa).

Belongs to the bacterial ribosomal protein bL12 family. As to quaternary structure, homodimer. Part of the ribosomal stalk of the 50S ribosomal subunit. Forms a multimeric L10(L12)X complex, where L10 forms an elongated spine to which 2 to 4 L12 dimers bind in a sequential fashion. Binds GTP-bound translation factors.

Functionally, forms part of the ribosomal stalk which helps the ribosome interact with GTP-bound translation factors. Is thus essential for accurate translation. This chain is Large ribosomal subunit protein bL12, found in Limosilactobacillus fermentum (strain NBRC 3956 / LMG 18251) (Lactobacillus fermentum).